The primary structure comprises 542 residues: FACT complex subunit POB3 (542 aa).

Residues 458 to 542 (RVKNEEKETQ…DRPSKKAKLA (85 aa)) are disordered. 2 stretches are compositionally biased toward acidic residues: residues 477–514 (DSEDEDVNMGSAAEDDESVDEDFQAESEDDDVAEEFDS) and 521–530 (SETEAADGAD).

Belongs to the SSRP1 family. As to quaternary structure, forms a stable heterodimer with SPT16. The SPT16-POB3 dimer weakly associates with multiple molecules of NHP6 to form the FACT complex.

It is found in the nucleus. The protein localises to the chromosome. Functionally, component of the FACT complex, a general chromatin factor that acts to reorganize nucleosomes. The FACT complex is involved in multiple processes that require DNA as a template such as mRNA elongation, DNA replication and DNA repair. During transcription elongation the FACT complex acts as a histone chaperone that both destabilizes and restores nucleosomal structure. It facilitates the passage of RNA polymerase II and transcription by promoting the dissociation of one histone H2A-H2B dimer from the nucleosome, then subsequently promotes the reestablishment of the nucleosome following the passage of RNA polymerase II. The sequence is that of FACT complex subunit POB3 (POB3) from Eremothecium gossypii (strain ATCC 10895 / CBS 109.51 / FGSC 9923 / NRRL Y-1056) (Yeast).